The chain runs to 309 residues: Protein FdhE homolog (309 aa).

It belongs to the FdhE family.

It localises to the cytoplasm. Its function is as follows. Necessary for formate dehydrogenase activity. This Yersinia pestis bv. Antiqua (strain Antiqua) protein is Protein FdhE homolog.